Consider the following 159-residue polypeptide: Ribosomal RNA large subunit methyltransferase H (159 aa).

Residues Leu76, Gly108, and 127-132 (FGRLTL) each bind S-adenosyl-L-methionine.

This sequence belongs to the RNA methyltransferase RlmH family. As to quaternary structure, homodimer.

The protein localises to the cytoplasm. The enzyme catalyses pseudouridine(1915) in 23S rRNA + S-adenosyl-L-methionine = N(3)-methylpseudouridine(1915) in 23S rRNA + S-adenosyl-L-homocysteine + H(+). Functionally, specifically methylates the pseudouridine at position 1915 (m3Psi1915) in 23S rRNA. This Streptococcus uberis (strain ATCC BAA-854 / 0140J) protein is Ribosomal RNA large subunit methyltransferase H.